The sequence spans 479 residues: NADH-quinone oxidoreductase subunit N 2 (479 aa).

14 consecutive transmembrane segments (helical) span residues 9 to 29 (WALASVPEIIVVTGACVLLIV), 40 to 60 (LLLWASVAIVLLAAVATLMLA), 75 to 95 (RFAVFFKLVFYLATILTFFLS), 110 to 130 (YVLLLFALVGMMIMASAIDLL), 131 to 151 (SIYVGLELMVLCTYVLTGFLR), 164 to 184 (VILGAVSTAIFLYGVSLIYGL), 206 to 226 (LLLAVVFIVAGLVFKIGAVPF), 238 to 258 (PTTITAFMSVAPKAAGFAVIL), 272 to 292 (WIIVAAIAVATMALGSFVALV), 299 to 319 (LLAYSSIAHAGFAIFGVVAGG), 326 to 346 (VMLYLLIYTFMNLGIFGAVIM), 371 to 391 (ALLMLLYLFSLAGIPPTAGFF), 404 to 424 (GFVALAVIAVLLSVVSAYFYI), and 449 to 469 (ATLAFTAAGTIGIGLFPAWFL).

The protein belongs to the complex I subunit 2 family. In terms of assembly, NDH-1 is composed of 14 different subunits. Subunits NuoA, H, J, K, L, M, N constitute the membrane sector of the complex.

The protein localises to the cell inner membrane. It catalyses the reaction a quinone + NADH + 5 H(+)(in) = a quinol + NAD(+) + 4 H(+)(out). Functionally, NDH-1 shuttles electrons from NADH, via FMN and iron-sulfur (Fe-S) centers, to quinones in the respiratory chain. The immediate electron acceptor for the enzyme in this species is believed to be ubiquinone. Couples the redox reaction to proton translocation (for every two electrons transferred, four hydrogen ions are translocated across the cytoplasmic membrane), and thus conserves the redox energy in a proton gradient. This Rhizobium meliloti (strain 1021) (Ensifer meliloti) protein is NADH-quinone oxidoreductase subunit N 2.